Reading from the N-terminus, the 350-residue chain is Holliday junction branch migration complex subunit RuvB (350 aa).

The large ATPase domain (RuvB-L) stretch occupies residues 1 to 183 (MSAERLVNPH…FVAVHRLVFY (183 aa)). Residues leucine 22, arginine 23, glycine 64, lysine 67, threonine 68, serine 69, 130–132 (EDF), arginine 173, tyrosine 183, and arginine 220 each bind ATP. Threonine 68 is a Mg(2+) binding site. Positions 184 to 254 (SDDAMTEIVS…VARDALAQLE (71 aa)) are small ATPAse domain (RuvB-S). Positions 257–350 (ELGLDENDRR…ESGPQQATLF (94 aa)) are head domain (RuvB-H). Arginine 312 and arginine 317 together coordinate DNA. Positions 331–350 (YPERTLPADDESGPQQATLF) are disordered.

Belongs to the RuvB family. In terms of assembly, homohexamer. Forms an RuvA(8)-RuvB(12)-Holliday junction (HJ) complex. HJ DNA is sandwiched between 2 RuvA tetramers; dsDNA enters through RuvA and exits via RuvB. An RuvB hexamer assembles on each DNA strand where it exits the tetramer. Each RuvB hexamer is contacted by two RuvA subunits (via domain III) on 2 adjacent RuvB subunits; this complex drives branch migration. In the full resolvosome a probable DNA-RuvA(4)-RuvB(12)-RuvC(2) complex forms which resolves the HJ.

It is found in the cytoplasm. The catalysed reaction is ATP + H2O = ADP + phosphate + H(+). In terms of biological role, the RuvA-RuvB-RuvC complex processes Holliday junction (HJ) DNA during genetic recombination and DNA repair, while the RuvA-RuvB complex plays an important role in the rescue of blocked DNA replication forks via replication fork reversal (RFR). RuvA specifically binds to HJ cruciform DNA, conferring on it an open structure. The RuvB hexamer acts as an ATP-dependent pump, pulling dsDNA into and through the RuvAB complex. RuvB forms 2 homohexamers on either side of HJ DNA bound by 1 or 2 RuvA tetramers; 4 subunits per hexamer contact DNA at a time. Coordinated motions by a converter formed by DNA-disengaged RuvB subunits stimulates ATP hydrolysis and nucleotide exchange. Immobilization of the converter enables RuvB to convert the ATP-contained energy into a lever motion, pulling 2 nucleotides of DNA out of the RuvA tetramer per ATP hydrolyzed, thus driving DNA branch migration. The RuvB motors rotate together with the DNA substrate, which together with the progressing nucleotide cycle form the mechanistic basis for DNA recombination by continuous HJ branch migration. Branch migration allows RuvC to scan DNA until it finds its consensus sequence, where it cleaves and resolves cruciform DNA. This chain is Holliday junction branch migration complex subunit RuvB, found in Chloroflexus aurantiacus (strain ATCC 29366 / DSM 635 / J-10-fl).